The following is a 694-amino-acid chain: Elongation factor G (694 aa).

The 276-residue stretch at 10–285 (EKTRNIGIMA…AVLDYLPSPV (276 aa)) folds into the tr-type G domain. Residues 19 to 26 (AHIDAGKT), 83 to 87 (DTPGH), and 137 to 140 (NKMD) each bind GTP.

Belongs to the TRAFAC class translation factor GTPase superfamily. Classic translation factor GTPase family. EF-G/EF-2 subfamily.

It localises to the cytoplasm. Catalyzes the GTP-dependent ribosomal translocation step during translation elongation. During this step, the ribosome changes from the pre-translocational (PRE) to the post-translocational (POST) state as the newly formed A-site-bound peptidyl-tRNA and P-site-bound deacylated tRNA move to the P and E sites, respectively. Catalyzes the coordinated movement of the two tRNA molecules, the mRNA and conformational changes in the ribosome. This is Elongation factor G from Limosilactobacillus fermentum (strain NBRC 3956 / LMG 18251) (Lactobacillus fermentum).